Here is a 210-residue protein sequence, read N- to C-terminus: RNA binding protein, mRNA processing factor 2 (210 aa).

The span at 1–10 (MSNLKPDVEH) shows a compositional bias: basic and acidic residues. The tract at residues 1–25 (MSNLKPDVEHCTGAGTGTGTGPSGP) is disordered. An N-acetylserine modification is found at serine 2. The 78-residue stretch at 31–108 (RTLFVSGLPV…QTLRLEFAKA (78 aa)) folds into the RRM domain. Positions 41 to 51 (DIKPRELYLLF) are important for homodimerization.

In terms of assembly, homodimer. Interacts with EEF2.

The protein localises to the cytoplasm. It localises to the nucleus. It is found in the stress granule. RNA-binding protein involved in the regulation of smooth muscle cell differentiation and proliferation in the gastrointestinal system. Binds NOG mRNA, the major inhibitor of the bone morphogenetic protein (BMP) pathway. Mediates an increase of NOG mRNA levels, thereby contributing to the negative regulation of BMP signaling pathway and promoting reversible dedifferentiation and proliferation of smooth muscle cells. Acts as a pre-mRNA alternative splicing regulator. Mediates ACTN1 and FLNB alternative splicing. Likely binds to mRNA tandem CAC trinucleotide or CA dinucleotide motifs. The chain is RNA binding protein, mRNA processing factor 2 (Rbpms2) from Rattus norvegicus (Rat).